A 173-amino-acid polypeptide reads, in one-letter code: Lactoylglutathione lyase (173 aa).

The VOC domain occupies 24–170; that stretch reads VFNHTMLRVK…DGYWVEVIQP (147 aa). H27 contributes to the Ni(2+) binding site. R31 lines the substrate pocket. E93 is a binding site for Ni(2+). The substrate site is built by N97, R116, and H120. 2 residues coordinate Ni(2+): H120 and E166. E166 serves as the catalytic Proton donor/acceptor.

It belongs to the glyoxalase I family. Monomer. Requires Ni(2+) as cofactor. It depends on Zn(2+) as a cofactor.

The enzyme catalyses (R)-S-lactoylglutathione = methylglyoxal + glutathione. Its pathway is secondary metabolite metabolism; methylglyoxal degradation; (R)-lactate from methylglyoxal: step 1/2. Functionally, catalyzes the conversion of hemimercaptal, formed from methylglyoxal and glutathione, to S-lactoylglutathione. The sequence is that of Lactoylglutathione lyase (gloA) from Pseudomonas putida (Arthrobacter siderocapsulatus).